Reading from the N-terminus, the 285-residue chain is MEAPPPAPRSRLCGAWGPFPRVFAAGAVAADSQSFVEDPELRSYVSDPGSSESGWDRLRQLFVKDEQRKISKEMDYICRAALSAGIIGWAYGGIPAFIYAKRRYIEQSQAEIYHNRFDAVQSAHRAATRGFIRYGWRWSWRTAVFVTIFNTVNTGLTVYRNKDALSHFAIAGAVTGGLFRINLGLRGLVAGGIIGALLGTPMGSLLMALEKHCGETVQERRQKDREAQQEQRLEEWRRNLQVTELLPMEIESGLEKIQPEKDAQRIEELLRLPRNPASPDKQSED.

4 helical membrane passes run 80-100, 137-159, 165-185, and 188-208; these read AALSAGIIGWAYGGIPAFIYA, RWSWRTAVFVTIFNTVNTGLTVY, LSHFAIAGAVTGGLFRINLGL, and LVAGGIIGALLGTPMGSLLMA.

This sequence belongs to the Tim17/Tim22/Tim23 family. Associates with the intermediate 315 kDa subcomplex of incompletely assembled complex I. Interacts with TMEM70.

Its subcellular location is the mitochondrion membrane. Functionally, chaperone protein involved in the assembly of the mitochondrial NADH:ubiquinone oxidoreductase complex (complex I). Participates in constructing the membrane arm of complex I. This Rattus norvegicus (Rat) protein is Complex I assembly factor TIMMDC1, mitochondrial.